We begin with the raw amino-acid sequence, 61 residues long: Small ribosomal subunit protein uS14 (61 aa).

Cysteine 24, cysteine 27, cysteine 40, and cysteine 43 together coordinate Zn(2+).

Belongs to the universal ribosomal protein uS14 family. Zinc-binding uS14 subfamily. As to quaternary structure, part of the 30S ribosomal subunit. Contacts proteins S3 and S10. Zn(2+) serves as cofactor.

Functionally, binds 16S rRNA, required for the assembly of 30S particles and may also be responsible for determining the conformation of the 16S rRNA at the A site. The sequence is that of Small ribosomal subunit protein uS14 from Thermus aquaticus.